The following is a 790-amino-acid chain: Exocyst complex component SEC15A (790 aa).

Positions 49–70 (LVHQLKNVARKKEAEIEDLCKT) form a coiled coil.

This sequence belongs to the SEC15 family. The exocyst complex is composed of SEC3, SEC5, SEC6, SEC8, SEC10, EXO70A1 and EXO84B.

The protein localises to the cytoplasm. The protein resides in the cytosol. Its function is as follows. Component of the exocyst complex involved in the docking of exocytic vesicles with fusion sites on the plasma membrane during regulated or polarized secretion. Involved in polarized cell growth and organ morphogenesis. During cytokinesis, involved in cell plate initiation, cell plate maturation and formation of new primary cell wall. In Arabidopsis thaliana (Mouse-ear cress), this protein is Exocyst complex component SEC15A (SEC15A).